The chain runs to 941 residues: Isoleucine--tRNA ligase (941 aa).

The short motif at 69-79 (PYANGDIHIGH) is the 'HIGH' region element. Residue Glu-589 participates in L-isoleucyl-5'-AMP binding. Positions 630–634 (KMSKS) match the 'KMSKS' region motif. Lys-633 contacts ATP. Residues Cys-915, Cys-918, Cys-932, and Cys-935 each coordinate Zn(2+).

It belongs to the class-I aminoacyl-tRNA synthetase family. IleS type 1 subfamily. As to quaternary structure, monomer. The cofactor is Zn(2+).

Its subcellular location is the cytoplasm. The catalysed reaction is tRNA(Ile) + L-isoleucine + ATP = L-isoleucyl-tRNA(Ile) + AMP + diphosphate. In terms of biological role, catalyzes the attachment of isoleucine to tRNA(Ile). As IleRS can inadvertently accommodate and process structurally similar amino acids such as valine, to avoid such errors it has two additional distinct tRNA(Ile)-dependent editing activities. One activity is designated as 'pretransfer' editing and involves the hydrolysis of activated Val-AMP. The other activity is designated 'posttransfer' editing and involves deacylation of mischarged Val-tRNA(Ile). The protein is Isoleucine--tRNA ligase of Zymomonas mobilis subsp. mobilis (strain ATCC 31821 / ZM4 / CP4).